The chain runs to 454 residues: tRNA modification GTPase MnmE (454 aa).

(6S)-5-formyl-5,6,7,8-tetrahydrofolate contacts are provided by R23, E80, and K120. The TrmE-type G domain maps to 216-377; the sequence is GMKVVIAGRP…LRNHLKQSMG (162 aa). N226 serves as a coordination point for K(+). GTP-binding positions include 226 to 231, 245 to 251, 270 to 273, 335 to 338, and 358 to 360; these read NAGKSS, TDIAGTT, DTAG, NKAD, and SAR. Residue S230 participates in Mg(2+) binding. Residues T245, I247, and T250 each contribute to the K(+) site. Residue T251 participates in Mg(2+) binding. (6S)-5-formyl-5,6,7,8-tetrahydrofolate is bound at residue K454.

Belongs to the TRAFAC class TrmE-Era-EngA-EngB-Septin-like GTPase superfamily. TrmE GTPase family. Homodimer. Heterotetramer of two MnmE and two MnmG subunits. K(+) is required as a cofactor.

The protein localises to the cytoplasm. Its function is as follows. Exhibits a very high intrinsic GTPase hydrolysis rate. Involved in the addition of a carboxymethylaminomethyl (cmnm) group at the wobble position (U34) of certain tRNAs, forming tRNA-cmnm(5)s(2)U34. In Shigella dysenteriae serotype 1 (strain Sd197), this protein is tRNA modification GTPase MnmE.